The sequence spans 1141 residues: DNA-directed RNA polymerase subunit beta (1141 aa).

This sequence belongs to the RNA polymerase beta chain family. In terms of assembly, the RNAP catalytic core consists of 2 alpha, 1 beta, 1 beta' and 1 omega subunit. When a sigma factor is associated with the core the holoenzyme is formed, which can initiate transcription.

It carries out the reaction RNA(n) + a ribonucleoside 5'-triphosphate = RNA(n+1) + diphosphate. DNA-dependent RNA polymerase catalyzes the transcription of DNA into RNA using the four ribonucleoside triphosphates as substrates. The chain is DNA-directed RNA polymerase subunit beta from Frankia casuarinae (strain DSM 45818 / CECT 9043 / HFP020203 / CcI3).